The chain runs to 458 residues: MSFDFIKDKNKHIHFIGIGGISMSGLAEILLYNNFSISGSDMNSSPITEKLKDKGAKIYIGHKKENIKDADLIVYTAAIASDNPEIIEAKEKNIKLMDRADFLGNLMKGYKYNIAISGTHGKTTTTSMLSHVALKANVDPTILVGGNLDIINGNVRVGESDFFITEACEYKSSFLKFFPYIGVILNIDADHLDYYKDLDDIKNAFSKFIKLIPKDGYLVAYGEDKNIQSIIKEANCNVITYGINSGDIQAHNIEYDEKACGNFDVVKDNQKLFSVKLNVPGKHNILNSLASICIGLASNMKDKDIIEGIESFFGTHRRFELKGCKNNITVIDDYAHHPTEISATLDAAKKYPHNKLFCVFQPHTYSRTLTLFDDFTKCFDNADEIILADIYAAREKDTGIISSDMLGDKLRDRGLKCTNFHKFDDIKNYLIENAKDGDLILTVGAGDIYKVGEMYINL.

118-124 provides a ligand contact to ATP; that stretch reads GTHGKTT.

The protein belongs to the MurCDEF family.

It is found in the cytoplasm. The catalysed reaction is UDP-N-acetyl-alpha-D-muramate + L-alanine + ATP = UDP-N-acetyl-alpha-D-muramoyl-L-alanine + ADP + phosphate + H(+). It participates in cell wall biogenesis; peptidoglycan biosynthesis. Its function is as follows. Cell wall formation. This is UDP-N-acetylmuramate--L-alanine ligase from Clostridium botulinum (strain Langeland / NCTC 10281 / Type F).